The chain runs to 336 residues: Probable ADP-ribosylation factor GTPase-activating protein AGD13 (336 aa).

One can recognise an Arf-GAP domain in the interval 15 to 137 (KRRIRDLLNQ…EFLKPSLRIT (123 aa)). The segment at 30 to 53 (CADCGASDPKWASANIGVFICLKC) adopts a C4-type zinc-finger fold. Residues 162–280 (RTNSSSQTMF…AMAFGDPEMF (119 aa)) form the C2 domain. D249, S252, and D255 together coordinate Ca(2+).

Requires Ca(2+) as cofactor.

Its function is as follows. GTPase-activating protein (GAP) for ADP ribosylation factor (ARF). The chain is Probable ADP-ribosylation factor GTPase-activating protein AGD13 (AGD13) from Arabidopsis thaliana (Mouse-ear cress).